A 585-amino-acid chain; its full sequence is Complement component C8 alpha chain (585 aa).

The signal sequence occupies residues 1 to 20 (MLVAAFFTLFLVTCQPAVTA). A propeptide spanning residues 21–30 (QEKVNQRVNR) is cleaved from the precursor. In terms of domain architecture, TSP type-1 1 spans 38–91 (DCQLSSWSEWTDCFPCQDTKYRHRSLLQPNKFGGTICSGDIWDRASCYSPTACL). 7 disulfides stabilise this stretch: Cys-39-Cys-74, Cys-50-Cys-84, Cys-53-Cys-90, Cys-96-Cys-108, Cys-102-Cys-121, Cys-115-Cys-130, and Cys-140-Cys-177. The C-linked (Man) tryptophan glycan is linked to Trp-44. The LDL-receptor class A domain occupies 94–132 (AQCGQDFQCKETGRCLKRHLVCNGENDCLDGSDEDNCED). Positions 113, 116, 118, 120, 126, and 127 each coordinate Ca(2+). The MACPF domain occupies 136–499 (TESDCAQYDP…QYLMEFNACR (364 aa)). The next 4 membrane-spanning stretches (beta stranded) occupy residues 248 to 256 (AGVTISAGL), 259 to 266 (SPLLGTVG), 377 to 384 (GGFGEIQY), and 391 to 396 (AQGILS). Residues Cys-375 and Cys-400 are joined by a disulfide bond. Residue Asn-438 is glycosylated (N-linked (GlcNAc...) asparagine). 4 cysteine pairs are disulfide-bonded: Cys-498–Cys-545, Cys-500–Cys-516, Cys-503–Cys-518, and Cys-520–Cys-529. The 32-residue stretch at 499 to 530 (RCGPCFNNGKPILEGTSCRCQCSLGLQGPACE) folds into the EGF-like domain. Positions 540–584 (DGHWSCWGSWSPCTAGTRERRRECNNPAPQNGGAPCPGWRVQTQA) constitute a TSP type-1 2 domain. C-linked (Man) tryptophan glycosylation is found at Trp-543, Trp-546, and Trp-549. Cystine bridges form between Cys-552–Cys-585 and Cys-563–Cys-575.

It belongs to the complement C6/C7/C8/C9 family. In terms of assembly, heterotrimer of 3 chains: alpha (C8A), beta (C8B) and gamma (C8G); the alpha and gamma chains are disulfide bonded. Component of the membrane attack complex (MAC), composed of complement C5b, C6, C7, C8A, C8B, C8G and multiple copies of the pore-forming subunit C9.

It is found in the secreted. It localises to the target cell membrane. With respect to regulation, membrane attack complex (MAC) assembly is inhibited by CD59, thereby protecting self-cells from damage during complement activation. CD59 acts by binding to the beta-haipins of C8 (C8A and C8B), forming an intermolecular beta-sheet that prevents incorporation of the multiple copies of C9 required for complete formation of the osmolytic pore. MAC assembly is also inhibited by clusterin (CLU) chaperones that inhibit polymerization of C9. Component of the membrane attack complex (MAC), a multiprotein complex activated by the complement cascade, which inserts into a target cell membrane and forms a pore, leading to target cell membrane rupture and cell lysis. The MAC is initiated by proteolytic cleavage of C5 into complement C5b in response to the classical, alternative, lectin and GZMK complement pathways. The complement pathways consist in a cascade of proteins that leads to phagocytosis and breakdown of pathogens and signaling that strengthens the adaptive immune system. C8A, together with C8B and C8G, inserts into the target membrane, but does not form pores by itself. During MAC assembly, associates with C5b, C6 and C7 to form the C5b8 intermediate complex that inserts into the target membrane and traverses the bilayer increasing membrane rigidity. The chain is Complement component C8 alpha chain (C8A) from Oryctolagus cuniculus (Rabbit).